The primary structure comprises 440 residues: Gamma-aminobutyric acid receptor subunit pi (440 aa).

The N-terminal stretch at 1-23 (MKRSLHLTFVCLSLFSARMCVQG) is a signal peptide. The Extracellular portion of the chain corresponds to 24–241 (NQFNIEVSRS…LVLQFELQRN (218 aa)). N-linked (GlcNAc...) asparagine glycosylation is found at asparagine 43, asparagine 102, and asparagine 145. Cysteine 160 and cysteine 174 are disulfide-bonded. N-linked (GlcNAc...) asparagine glycosylation is found at asparagine 196 and asparagine 228. A helical transmembrane segment spans residues 242–262 (VLYFILETYVPSTFLVVLSWV). At 263–270 (SFWISLDS) the chain is on the cytoplasmic side. A helical membrane pass occupies residues 271–290 (VPARTCIGVTTVLSMTTLMI). Topologically, residues 291–301 (GSRTSLPNTNC) are extracellular. Residues 302–322 (FIKAIDVYLGICFSFVFGALL) form a helical membrane-spanning segment. Over 323–419 (EYAVAHYSSL…NPSNVDRYSK (97 aa)) the chain is Cytoplasmic. A helical transmembrane segment spans residues 420 to 440 (LLFPLIFMLANVFYWAYYMYF).

Belongs to the ligand-gated ion channel (TC 1.A.9) family. Gamma-aminobutyric acid receptor (TC 1.A.9.5) subfamily. GABRP sub-subfamily. As to quaternary structure, heteropentamer, formed by a combination of alpha (GABRA1-6), beta (GABRB1-3), gamma (GABRG1-3), delta (GABRD), epsilon (GABRE), rho (GABRR1-3), pi (GABRP) and theta (GABRQ) chains, each subunit exhibiting distinct physiological and pharmacological properties.

The protein localises to the cell membrane. The protein resides in the apical cell membrane. It carries out the reaction chloride(in) = chloride(out). Its function is as follows. Pi subunit of the heteropentameric ligand-gated chloride channel gated by gamma-aminobutyric acid (GABA). GABA-gated chloride channels, also named GABA(A) receptors (GABAAR), consist of five subunits arranged around a central pore and contain GABA active binding site(s) located at the alpha and beta subunit interfaces. When activated by GABA, GABAARs selectively allow the flow of chloride anions across the cell membrane down their electrochemical gradient. Pi-containing GABAARs are mostly located in peripheral tissues. In the uterus, pi subunits modulate uterus contraction by altering the sensitivity of GABAARs to pregnanolone. In the lungs, pi-containing GABAARs contribute to pulmonary fluid transport via luminal secretion of chloride. This chain is Gamma-aminobutyric acid receptor subunit pi (GABRP), found in Bos taurus (Bovine).